A 365-amino-acid chain; its full sequence is MQNNEVLKPAKYFSELEKSVLLALVEKYKYVLECKKSDARTIALKQRTWQALAHEYNSQPSVSLRDFKQLKKCWENIKARTKKIMAHERREKGKLFGPESNSHQALKEKVASMLPEQLYFVQNQPEEERGYNHDTSNQEMDCKRVNLLDLEVLIDEQGKIQTKPFRKVPETNLLCDDGSPPQSIDKAFSNGDLELLIDEQGKIQAEPIRKVPVTDSQCIQGSPSSSLKTESFVVPERDVYEDQNSIANMHSSESSVHSTPIFPSSKLSANRTYGRKPSQNGIFTKMHEEQHHQQMSILQLQLIQMNEVHVAKVQQIERECEMAEEEHRIKMEILNKKKMYWERKLQTITKEWPVASFNRPFPNSP.

In terms of domain architecture, Myb-like spans 13-78; that stretch reads FSELEKSVLL…QLKKCWENIK (66 aa). Residues 301 to 337 are a coiled coil; that stretch reads QLIQMNEVHVAKVQQIERECEMAEEEHRIKMEILNKK.

It belongs to the MSANTD3 family.

The chain is Myb/SANT-like DNA-binding domain-containing protein 3 (msantd3) from Xenopus laevis (African clawed frog).